Reading from the N-terminus, the 188-residue chain is Ribosome maturation factor RimM (188 aa).

In terms of domain architecture, PRC barrel spans 98 to 174 (EGTFYYHDLR…HLTADAPAGL (77 aa)). Positions 169-188 (DAPAGLIGPEPGEEDGAAES) are disordered. Acidic residues predominate over residues 179 to 188 (PGEEDGAAES).

It belongs to the RimM family. As to quaternary structure, binds ribosomal protein uS19.

The protein localises to the cytoplasm. In terms of biological role, an accessory protein needed during the final step in the assembly of 30S ribosomal subunit, possibly for assembly of the head region. Essential for efficient processing of 16S rRNA. May be needed both before and after RbfA during the maturation of 16S rRNA. It has affinity for free ribosomal 30S subunits but not for 70S ribosomes. The protein is Ribosome maturation factor RimM of Deinococcus radiodurans (strain ATCC 13939 / DSM 20539 / JCM 16871 / CCUG 27074 / LMG 4051 / NBRC 15346 / NCIMB 9279 / VKM B-1422 / R1).